The following is a 718-amino-acid chain: Peroxisomal bifunctional enzyme (718 aa).

The interval 1–280 (MAEYLRLPHS…FAEKSANKWS (280 aa)) is enoyl-CoA hydratase / isomerase. Lysine 38 is modified (N6-succinyllysine). A substrate-binding site is contributed by glycine 99. An N6-acetyllysine; alternate mark is found at lysine 163 and lysine 172. An N6-succinyllysine; alternate mark is found at lysine 163 and lysine 172. At lysine 181 the chain carries N6-succinyllysine. N6-acetyllysine; alternate is present on residues lysine 189 and lysine 217. N6-succinyllysine; alternate occurs at positions 189 and 217. Lysine 240 carries the N6-succinyllysine modification. The residue at position 248 (lysine 248) is an N6-acetyllysine. Lysine 252 carries the post-translational modification N6-succinyllysine. Lysine 274 is subject to N6-acetyllysine; alternate. Lysine 274 bears the N6-succinyllysine; alternate mark. 3 positions are modified to N6-succinyllysine: lysine 278, lysine 288, and lysine 329. A 3-hydroxyacyl-CoA dehydrogenase region spans residues 281–567 (TPSGASWKTA…DMLCEAGRFG (287 aa)). 4 positions are modified to N6-acetyllysine: lysine 344, lysine 348, lysine 355, and lysine 459. Residue lysine 527 is modified to N6-succinyllysine. Threonine 543 carries the phosphothreonine modification. An N6-succinyllysine modification is found at lysine 572. N6-acetyllysine; alternate is present on residues lysine 579, lysine 586, and lysine 705. Residues lysine 579, lysine 586, and lysine 705 each carry the N6-succinyllysine; alternate modification. The short motif at 716-718 (SKL) is the Microbody targeting signal element. An N6-succinyllysine modification is found at lysine 717.

This sequence in the N-terminal section; belongs to the enoyl-CoA hydratase/isomerase family. The protein in the C-terminal section; belongs to the 3-hydroxyacyl-CoA dehydrogenase family. In terms of assembly, monomer. Acetylated, leading to enhanced enzyme activity. Acetylation is enhanced by up to 80% after treatment either with trichostin A (TCA) or with nicotinamide (NAM) with highest increase on Lys-344. Acetylation and enzyme activity increased by about 1.5% on addition of fatty acids.

It localises to the peroxisome. It carries out the reaction a (3S)-3-hydroxyacyl-CoA = a (2E)-enoyl-CoA + H2O. The enzyme catalyses a 4-saturated-(3S)-3-hydroxyacyl-CoA = a (3E)-enoyl-CoA + H2O. The catalysed reaction is a (3Z)-enoyl-CoA = a 4-saturated (2E)-enoyl-CoA. It catalyses the reaction a (3E)-enoyl-CoA = a 4-saturated (2E)-enoyl-CoA. It carries out the reaction a (3S)-3-hydroxyacyl-CoA + NAD(+) = a 3-oxoacyl-CoA + NADH + H(+). The enzyme catalyses (2S,3S)-3-hydroxy-2-methylbutanoyl-CoA = (2E)-2-methylbut-2-enoyl-CoA + H2O. The catalysed reaction is (2E)-dodecenedioyl-CoA + H2O = (3S)-hydroxydodecanedioyl-CoA. It catalyses the reaction (3S)-hydroxydodecanedioyl-CoA + NAD(+) = 3-oxododecanedioyl-CoA + NADH + H(+). It carries out the reaction (2E)-octenedioyl-CoA + H2O = (3S)-hydroxyoctanedioyl-CoA. The enzyme catalyses (3S)-hydroxyoctanedioyl-CoA + NAD(+) = 3-oxooctanedioyl-CoA + NADH + H(+). The catalysed reaction is (2E)-decenedioyl-CoA + H2O = (3S)-hydroxydecanedioyl-CoA. It catalyses the reaction (3S)-hydroxydecanedioyl-CoA + NAD(+) = 3-oxodecanedioyl-CoA + NADH + H(+). It carries out the reaction (2E)-tetradecenedioyl-CoA + H2O = (3S)-hydroxytetradecanedioyl-CoA. The enzyme catalyses (3S)-hydroxytetradecanedioyl-CoA + NAD(+) = 3-oxotetradecanedioyl-CoA + NADH + H(+). The catalysed reaction is (3E,5Z)-tetradecadienoyl-CoA = (2E,5Z)-tetradecadienoyl-CoA. It catalyses the reaction (3E,5Z)-octadienoyl-CoA = (2E,5Z)-octadienoyl-CoA. It carries out the reaction (3S)-hydroxydecanoyl-CoA + NAD(+) = 3-oxodecanoyl-CoA + NADH + H(+). The enzyme catalyses (3E)-decenoyl-CoA = (2E)-decenoyl-CoA. The catalysed reaction is (3Z)-hexenoyl-CoA = (2E)-hexenoyl-CoA. It catalyses the reaction (3E)-hexenoyl-CoA = (2E)-hexenoyl-CoA. It carries out the reaction (3S)-hydroxydecanoyl-CoA = (2E)-decenoyl-CoA + H2O. The enzyme catalyses (3S)-hydroxyhexanoyl-CoA = (2E)-hexenoyl-CoA + H2O. The catalysed reaction is (3S)-hydroxyhexadecanoyl-CoA + NAD(+) = 3-oxohexadecanoyl-CoA + NADH + H(+). It catalyses the reaction (3S)-hydroxyhexadecanoyl-CoA = (2E)-hexadecenoyl-CoA + H2O. It carries out the reaction (2E)-hexadecenedioyl-CoA + H2O = (3S)-hydroxyhexadecanedioyl-CoA. The enzyme catalyses (3S)-hydroxyhexadecanedioyl-CoA + NAD(+) = 3-oxohexadecanedioyl-CoA + NADH + H(+). It functions in the pathway lipid metabolism; fatty acid beta-oxidation. Enzyme activity enhanced by acetylation. Its function is as follows. Peroxisomal trifunctional enzyme possessing 2-enoyl-CoA hydratase, 3-hydroxyacyl-CoA dehydrogenase, and delta 3, delta 2-enoyl-CoA isomerase activities. Catalyzes two of the four reactions of the long chain fatty acids peroxisomal beta-oxidation pathway. Can also use branched-chain fatty acids such as 2-methyl-2E-butenoyl-CoA as a substrate, which is hydrated into (2S,3S)-3-hydroxy-2-methylbutanoyl-CoA. Optimal isomerase for 2,5 double bonds into 3,5 form isomerization in a range of enoyl-CoA species. Also able to isomerize both 3-cis and 3-trans double bonds into the 2-trans form in a range of enoyl-CoA species. With HSD17B4, catalyzes the hydration of trans-2-enoyl-CoA and the dehydrogenation of 3-hydroxyacyl-CoA, but with opposite chiral specificity. Regulates the amount of medium-chain dicarboxylic fatty acids which are essential regulators of all fatty acid oxidation pathways. Also involved in the degradation of long-chain dicarboxylic acids through peroxisomal beta-oxidation. The sequence is that of Peroxisomal bifunctional enzyme from Mus musculus (Mouse).